The following is a 119-amino-acid chain: Ribosome-binding factor A (119 aa).

The protein belongs to the RbfA family. As to quaternary structure, monomer. Binds 30S ribosomal subunits, but not 50S ribosomal subunits or 70S ribosomes.

Its subcellular location is the cytoplasm. In terms of biological role, one of several proteins that assist in the late maturation steps of the functional core of the 30S ribosomal subunit. Associates with free 30S ribosomal subunits (but not with 30S subunits that are part of 70S ribosomes or polysomes). Required for efficient processing of 16S rRNA. May interact with the 5'-terminal helix region of 16S rRNA. This chain is Ribosome-binding factor A, found in Chlorobium luteolum (strain DSM 273 / BCRC 81028 / 2530) (Pelodictyon luteolum).